We begin with the raw amino-acid sequence, 373 residues long: Glutamate 5-kinase (373 aa).

Lys-16 contacts ATP. Residues Ser-56, Asp-143, and Asn-155 each contribute to the substrate site. ATP is bound at residue 175–176 (TD). One can recognise a PUA domain in the interval 281–359 (RGVVTLDDGA…TKIETLLGYK (79 aa)).

The protein belongs to the glutamate 5-kinase family.

The protein localises to the cytoplasm. It carries out the reaction L-glutamate + ATP = L-glutamyl 5-phosphate + ADP. It functions in the pathway amino-acid biosynthesis; L-proline biosynthesis; L-glutamate 5-semialdehyde from L-glutamate: step 1/2. Its function is as follows. Catalyzes the transfer of a phosphate group to glutamate to form L-glutamate 5-phosphate. This is Glutamate 5-kinase from Teredinibacter turnerae (strain ATCC 39867 / T7901).